The primary structure comprises 693 residues: Glycine--tRNA ligase beta subunit (693 aa).

It belongs to the class-II aminoacyl-tRNA synthetase family. Tetramer of two alpha and two beta subunits.

Its subcellular location is the cytoplasm. The catalysed reaction is tRNA(Gly) + glycine + ATP = glycyl-tRNA(Gly) + AMP + diphosphate. This is Glycine--tRNA ligase beta subunit from Ligilactobacillus salivarius (strain UCC118) (Lactobacillus salivarius).